The primary structure comprises 203 residues: MIGRLRGIILEKQPPIVLLETGGVGYEVHMPMTCFYELPEAGQEAIVFTHFVVREDAQLLYGFNNKQERTLFKELIKTNGVGPKLALAILSGMSAQQFVNAVEREELGALVKLPGIGKKTAERLIVEMKDRFKGLHGDLFTPAVDLVLTSPASPTSEDAEQEAVAALVALGYKPQEASRMVNKIARPDASSETLIRDALRAAL.

The interval 1-64 (MIGRLRGIIL…EDAQLLYGFN (64 aa)) is domain I. The domain II stretch occupies residues 65-142 (NKQERTLFKE…KGLHGDLFTP (78 aa)). The interval 143-154 (AVDLVLTSPASP) is flexible linker. The domain III stretch occupies residues 155-203 (TSEDAEQEAVAALVALGYKPQEASRMVNKIARPDASSETLIRDALRAAL).

This sequence belongs to the RuvA family. Homotetramer. Forms an RuvA(8)-RuvB(12)-Holliday junction (HJ) complex. HJ DNA is sandwiched between 2 RuvA tetramers; dsDNA enters through RuvA and exits via RuvB. An RuvB hexamer assembles on each DNA strand where it exits the tetramer. Each RuvB hexamer is contacted by two RuvA subunits (via domain III) on 2 adjacent RuvB subunits; this complex drives branch migration. In the full resolvosome a probable DNA-RuvA(4)-RuvB(12)-RuvC(2) complex forms which resolves the HJ.

It is found in the cytoplasm. The RuvA-RuvB-RuvC complex processes Holliday junction (HJ) DNA during genetic recombination and DNA repair, while the RuvA-RuvB complex plays an important role in the rescue of blocked DNA replication forks via replication fork reversal (RFR). RuvA specifically binds to HJ cruciform DNA, conferring on it an open structure. The RuvB hexamer acts as an ATP-dependent pump, pulling dsDNA into and through the RuvAB complex. HJ branch migration allows RuvC to scan DNA until it finds its consensus sequence, where it cleaves and resolves the cruciform DNA. In Salmonella choleraesuis (strain SC-B67), this protein is Holliday junction branch migration complex subunit RuvA.